A 156-amino-acid chain; its full sequence is Lipoprotein signal peptidase (156 aa).

The next 2 helical transmembrane spans lie at 57 to 77 and 83 to 103; these read LFLI…LFIN and ILKI…IDRI. Active-site residues include Asp-110 and Asp-129. A helical transmembrane segment spans residues 124 to 144; it reads IFNIADVLVSLGTILLIIFII.

The protein belongs to the peptidase A8 family.

It is found in the cell membrane. It catalyses the reaction Release of signal peptides from bacterial membrane prolipoproteins. Hydrolyzes -Xaa-Yaa-Zaa-|-(S,diacylglyceryl)Cys-, in which Xaa is hydrophobic (preferably Leu), and Yaa (Ala or Ser) and Zaa (Gly or Ala) have small, neutral side chains.. It participates in protein modification; lipoprotein biosynthesis (signal peptide cleavage). Its function is as follows. This protein specifically catalyzes the removal of signal peptides from prolipoproteins. The sequence is that of Lipoprotein signal peptidase from Clostridium tetani (strain Massachusetts / E88).